Here is a 129-residue protein sequence, read N- to C-terminus: Iron-sulfur cluster assembly 1 homolog, mitochondrial (129 aa).

Residues 1 to 12 constitute a mitochondrion transit peptide; the sequence is MSASIARATVRA. 3 residues coordinate Fe cation: Cys57, Cys121, and Cys123.

This sequence belongs to the HesB/IscA family.

It is found in the mitochondrion. Its function is as follows. Involved in the maturation of mitochondrial 4Fe-4S proteins functioning late in the iron-sulfur cluster assembly pathway. Probably involved in the binding of an intermediate of Fe/S cluster assembly. The chain is Iron-sulfur cluster assembly 1 homolog, mitochondrial (isca1) from Danio rerio (Zebrafish).